The chain runs to 766 residues: Pyrophosphate-energized vacuolar membrane proton pump (766 aa).

Residues 2–8 (GAAILPD) are Intravacuolar-facing. Residues 9–35 (LGTEILIPVCAVIGIAFALFQWLLVSK) traverse the membrane as a helical segment. The Cytoplasmic portion of the chain corresponds to 36–84 (VKLSAVRDASPNAAAKNGYNDYLIEEEEGINDHNVVVKCAEIQNAISEG). Residues 85-114 (ATSFLFTEYKYVGIFMVAFAILIFLFLGSV) form a helical membrane-spanning segment. At 115-135 (EGFSTSPQACSYDKTKTCKPA) the chain is on the intravacuolar side. Cys124 and Cys132 are joined by a disulfide. Residues 136–163 (LATAIFSTVSFLLGGVTSLVSGFLGMKI) form a helical membrane-spanning segment. The Cytoplasmic portion of the chain corresponds to 164-186 (ATYANARTTLEARKGVGKAFITA). A helical transmembrane segment spans residues 187 to 216 (FRSGAVMGFLLAANGLLVLYIAINLFKIYY). Over 217 to 219 (GDD) the chain is Intravacuolar. A helical membrane pass occupies residues 220-248 (WGGLFEAITGYGLGGSSMALFGRVGGGIY). At 249–286 (TKAADVGADLVGKVERNIPEDDPRNPAVIADNVGDNVG) the chain is on the cytoplasmic side. Lys250 lines the substrate pocket. Mg(2+) is bound by residues Asp253, Asp257, and Asp283. Residues 287-312 (DIAGMGSDLFGSYAESSCAALVVASI) form a helical membrane-spanning segment. Topologically, residues 313-320 (SSFGLNHE) are intravacuolar. A helical transmembrane segment spans residues 321–346 (LTAMLYPLIVSSVGILVCLLTTLFAT). Over 347 to 354 (DFFEIKAV) the chain is Cytoplasmic. Residues 355-382 (KEIEPALKKQLVISTVLMTIGVAVVSFV) form a helical membrane-spanning segment. Topologically, residues 383-401 (ALPTSFTIFNFGVQKDVKS) are intravacuolar. Residues 402 to 425 (WQLFLCVAVGLWAGLIIGFVTEYY) traverse the membrane as a helical segment. Residues 426–447 (TSNAYSPVQDVADSCRTGAATN) are Cytoplasmic-facing. Residues 448–472 (VIFGLALGYKSVIIPIFAIAISIFV) traverse the membrane as a helical segment. Residues 473-478 (SFTFAA) lie on the Intravacuolar side of the membrane. A helical membrane pass occupies residues 479-505 (MYGIAVAALGMLSTIATGLAIDAYGPI). At 506-534 (SDNAGGIAEMAGMSHRIRERTDALDAAGN) the chain is on the cytoplasmic side. Mg(2+)-binding residues include Asp507 and Asn534. Residues 535 to 563 (TTAAIGKGFAIGSAALVSLALFGAFVSRA) traverse the membrane as a helical segment. The Intravacuolar portion of the chain corresponds to 564 to 573 (SITTVDVLTP). A helical transmembrane segment spans residues 574 to 602 (KVFIGLIVGAMLPYWFSAMTMKSVGSAAL). The Cytoplasmic portion of the chain corresponds to 603 to 631 (KMVEEVRRQFNTIPGLMEGTAKPDYATCV). Residues 632–660 (KISTDASIKEMIPPGALVMLTPLVVGILF) traverse the membrane as a helical segment. Gly661 is a topological domain (intravacuolar). The chain crosses the membrane as a helical span at residues 662–689 (VETLSGVLAGSLVSGVQIAISASNTGGA). Residues 690 to 732 (WDNAKKYIEAGASEHARSLGPKGSDCHKAAVIGDTIGDPLKDT) are Cytoplasmic-facing. Asp691 and Asp727 together coordinate Mg(2+). Lys730 serves as a coordination point for substrate. The helical transmembrane segment at 733–758 (SGPSLNILIKLMAVESLVFAPFFATH) threads the bilayer. Topologically, residues 759–765 (GGLLFKI) are intravacuolar.

This sequence belongs to the H(+)-translocating pyrophosphatase (TC 3.A.10) family. K(+)-stimulated subfamily. Homodimer.

It is found in the vacuole membrane. The enzyme catalyses diphosphate + H2O + H(+)(in) = 2 phosphate + 2 H(+)(out). Its activity is regulated as follows. Inhibited by excess pyrophosphate as well as excess Mg(2+). Inhibition by ATP, GTP, and CTP is reversed by increasing the Mg(2+) concentration. This suggests that the substrate is a particular metal complex such as MgPPi(2-). Modification of Asp-283 with DCCD abolishes pyrophosphatase activity. Proton-translocating inorganic pyrophosphatase that contributes to the transtonoplast (from cytosol to vacuole lumen) H(+)-electrochemical potential difference. It establishes a proton gradient of similar and often greater magnitude than the H(+)-ATPase on the same membrane. This Vigna radiata var. radiata (Mung bean) protein is Pyrophosphate-energized vacuolar membrane proton pump.